A 177-amino-acid polypeptide reads, in one-letter code: MDTTQVTLIHQILAAADERNLPLWIGGGWAIDARLGRVTRKHDDIDLTFPGERRGELEAMVEMLGGRVTEELDYGFLAEIGDELLDCEPAWWADEAYEIAEAPQGSCPEAAEGVIAGRPVRCNSWEAIIWDYFYYADEVPPVDWPTKHIESYRLACTSLGAEKVEVLRAAFRSRYAA.

Residues Asp44, Asp46, and Asp86 each contribute to the Mg(2+) site. Residue Asp86 is the Proton acceptor of the active site.

The cofactor is Mg(2+).

The enzyme catalyses nucleoside triphosphate + gentamicin = diphosphate + 2''-nucleotidylgentamicin.. Its function is as follows. Mediates bacterial resistance to kanamycin, gentamicin, dibekacin, sisomicin, neomycin and tobramycin by adenylating the 2''-hydroxyl group of these antibiotics. The chain is 2''-aminoglycoside nucleotidyltransferase (aadB) from Klebsiella pneumoniae.